Reading from the N-terminus, the 301-residue chain is Light-independent protochlorophyllide reductase iron-sulfur ATP-binding protein (301 aa).

Residues 1–13 are compositionally biased toward low complexity; sequence MNVTLRPPLAAAP. Residues 1–22 form a disordered region; that stretch reads MNVTLRPPLAAAPRRPDGAGSV. ATP is bound by residues 45–50 and K74; that span reads GIGKST. A Mg(2+)-binding site is contributed by S49. Positions 130 and 164 each coordinate [4Fe-4S] cluster. ATP-binding positions include 215–216 and 239–241; these read NR and PDL.

The protein belongs to the NifH/BchL/ChlL family. As to quaternary structure, homodimer. Protochlorophyllide reductase is composed of three subunits; BchL, BchN and BchB. [4Fe-4S] cluster serves as cofactor.

It catalyses the reaction chlorophyllide a + oxidized 2[4Fe-4S]-[ferredoxin] + 2 ADP + 2 phosphate = protochlorophyllide a + reduced 2[4Fe-4S]-[ferredoxin] + 2 ATP + 2 H2O. The protein operates within porphyrin-containing compound metabolism; bacteriochlorophyll biosynthesis (light-independent). Its function is as follows. Component of the dark-operative protochlorophyllide reductase (DPOR) that uses Mg-ATP and reduced ferredoxin to reduce ring D of protochlorophyllide (Pchlide) to form chlorophyllide a (Chlide). This reaction is light-independent. The L component serves as a unique electron donor to the NB-component of the complex, and binds Mg-ATP. In Bradyrhizobium sp. (strain ORS 278), this protein is Light-independent protochlorophyllide reductase iron-sulfur ATP-binding protein.